The following is a 325-amino-acid chain: Ribosomal RNA small subunit methyltransferase C (325 aa).

Belongs to the methyltransferase superfamily. RsmC family. As to quaternary structure, monomer.

The protein localises to the cytoplasm. The catalysed reaction is guanosine(1207) in 16S rRNA + S-adenosyl-L-methionine = N(2)-methylguanosine(1207) in 16S rRNA + S-adenosyl-L-homocysteine + H(+). Specifically methylates the guanine in position 1207 of 16S rRNA in the 30S particle. This is Ribosomal RNA small subunit methyltransferase C from Alcanivorax borkumensis (strain ATCC 700651 / DSM 11573 / NCIMB 13689 / SK2).